Consider the following 203-residue polypeptide: Outer-membrane lipoprotein carrier protein (203 aa).

The signal sequence occupies residues 1–21; the sequence is MKKLIISCCLLATFSAAGAWA. The disordered stretch occupies residues 174–203; it reads ALKSQQSGPISADKFKFRPPKGVTVDDQRQ.

This sequence belongs to the LolA family. In terms of assembly, monomer.

It localises to the periplasm. Functionally, participates in the translocation of lipoproteins from the inner membrane to the outer membrane. Only forms a complex with a lipoprotein if the residue after the N-terminal Cys is not an aspartate (The Asp acts as a targeting signal to indicate that the lipoprotein should stay in the inner membrane). This Erwinia tasmaniensis (strain DSM 17950 / CFBP 7177 / CIP 109463 / NCPPB 4357 / Et1/99) protein is Outer-membrane lipoprotein carrier protein.